The chain runs to 197 residues: dTTP/UTP pyrophosphatase (197 aa).

The active-site Proton acceptor is the D70.

It belongs to the Maf family. YhdE subfamily. A divalent metal cation is required as a cofactor.

The protein localises to the cytoplasm. It carries out the reaction dTTP + H2O = dTMP + diphosphate + H(+). The catalysed reaction is UTP + H2O = UMP + diphosphate + H(+). Functionally, nucleoside triphosphate pyrophosphatase that hydrolyzes dTTP and UTP. May have a dual role in cell division arrest and in preventing the incorporation of modified nucleotides into cellular nucleic acids. In Shigella sonnei (strain Ss046), this protein is dTTP/UTP pyrophosphatase (yceF2).